The sequence spans 406 residues: MADGIISVSYLSKIENNQVVPSEEVLRLLCQRLGINNILKNRQDELTSKLLLWYKTITDKNRQEAARMYEEIKRTFDDVQGAESIAYFLLFEMRYHLLLKDIHTVEALLIKLRELYDTFDDVMKYYYYKFLGLLYYCKEKYEDALEYYKKAEQRFRSQSFEKWEEADLHYLLALVYSRLWRILGCINYAQHALAIYQSEYDLKRSAECHILLGICYRRYGEVDQAIECYSLAHKIAQIINDTELLGTIEHNLGYLMSMKHEHYEAIQHYKKSLLYKRNSSLQARFITLFSLIKEYYVSKNYKKALANVEESLQLLKREKDGMTTYYEYYLHFTVYQYLLSEDISENEFETFMKDRVLPYFQRFKKYEDVAQYAEYLAIYYEKRHKYKLASKFYKMSYQFLKNMINI.

TPR repeat units follow at residues Tyr125–Gln158, Ala206–Ile239, Gly246–Ser279, and Phe285–Glu318.

Functionally, activates the transcription of nprS by about five fold. May bind to the upstream region of nprS promoter. This chain is Transcriptional activator NprA (nprA), found in Geobacillus stearothermophilus (Bacillus stearothermophilus).